A 187-amino-acid chain; its full sequence is Elongation factor P (187 aa).

Belongs to the elongation factor P family.

It is found in the cytoplasm. It functions in the pathway protein biosynthesis; polypeptide chain elongation. Its function is as follows. Involved in peptide bond synthesis. Stimulates efficient translation and peptide-bond synthesis on native or reconstituted 70S ribosomes in vitro. Probably functions indirectly by altering the affinity of the ribosome for aminoacyl-tRNA, thus increasing their reactivity as acceptors for peptidyl transferase. The polypeptide is Elongation factor P (Helicobacter pylori (strain G27)).